A 269-amino-acid polypeptide reads, in one-letter code: L-cystine-binding protein TcyJ (269 aa).

The first 20 residues, 1–20 (MNKRKGLVLLLSVFALLGGG), serve as a signal peptide directing secretion. Residue Cys-21 is the site of N-palmitoyl cysteine attachment. Cys-21 is lipidated: S-diacylglycerol cysteine.

This sequence belongs to the bacterial solute-binding protein 3 family. The complex is composed of two ATP-binding proteins (TcyN), two transmembrane proteins (TcyL and TcyM) and two solute-binding proteins (TcyJ and TcyK).

It localises to the cell membrane. Functionally, part of the ABC transporter complex TcyJKLMN involved in L-cystine import. Is also involved in cystathionine, djenkolate, and S-methylcysteine transport. The chain is L-cystine-binding protein TcyJ (tcyJ) from Bacillus subtilis (strain 168).